A 28-amino-acid chain; its full sequence is Endoglucanase (28 aa).

Glu-20 functions as the Nucleophile in the catalytic mechanism.

The protein belongs to the glycosyl hydrolase 5 (cellulase A) family.

It is found in the cell membrane. It carries out the reaction Endohydrolysis of (1-&gt;4)-beta-D-glucosidic linkages in cellulose, lichenin and cereal beta-D-glucans.. In Schizophyllum commune (Split gill fungus), this protein is Endoglucanase.